Reading from the N-terminus, the 203-residue chain is dTTP/UTP pyrophosphatase (203 aa).

Asp-70 serves as the catalytic Proton acceptor.

It belongs to the Maf family. YhdE subfamily. A divalent metal cation is required as a cofactor.

It is found in the cytoplasm. The catalysed reaction is dTTP + H2O = dTMP + diphosphate + H(+). The enzyme catalyses UTP + H2O = UMP + diphosphate + H(+). Nucleoside triphosphate pyrophosphatase that hydrolyzes dTTP and UTP. May have a dual role in cell division arrest and in preventing the incorporation of modified nucleotides into cellular nucleic acids. The chain is dTTP/UTP pyrophosphatase (maf-1) from Pseudomonas putida (strain ATCC 47054 / DSM 6125 / CFBP 8728 / NCIMB 11950 / KT2440).